The primary structure comprises 119 residues: DNA-directed RNA polymerase subunit omega (119 aa).

Belongs to the RNA polymerase subunit omega family. The RNAP catalytic core consists of 2 alpha, 1 beta, 1 beta' and 1 omega subunit. When a sigma factor is associated with the core the holoenzyme is formed, which can initiate transcription.

The enzyme catalyses RNA(n) + a ribonucleoside 5'-triphosphate = RNA(n+1) + diphosphate. Its function is as follows. Promotes RNA polymerase assembly. Latches the N- and C-terminal regions of the beta' subunit thereby facilitating its interaction with the beta and alpha subunits. The sequence is that of DNA-directed RNA polymerase subunit omega (rpoZ) from Caulobacter vibrioides (strain ATCC 19089 / CIP 103742 / CB 15) (Caulobacter crescentus).